The following is a 451-amino-acid chain: Bifunctional protein GlmU (451 aa).

A pyrophosphorylase region spans residues 1 to 225 (MSLAVVILAA…EFEIQGVNDR (225 aa)). UDP-N-acetyl-alpha-D-glucosamine is bound by residues 8–11 (LAAG), K22, Q73, 78–79 (GT), 99–101 (YGD), G135, E150, N165, and N223. Position 101 (D101) interacts with Mg(2+). N223 provides a ligand contact to Mg(2+). Residues 226–246 (IQLAQLEREWQKHIAEVIMSK) are linker. Residues 247–451 (GVSVADPSRI…IDTWQRPVKK (205 aa)) form an N-acetyltransferase region. UDP-N-acetyl-alpha-D-glucosamine contacts are provided by R329 and K347. The active-site Proton acceptor is H359. UDP-N-acetyl-alpha-D-glucosamine-binding residues include Y362 and N373. Acetyl-CoA contacts are provided by residues A376, 382 to 383 (NY), S401, A419, and R436.

In the N-terminal section; belongs to the N-acetylglucosamine-1-phosphate uridyltransferase family. It in the C-terminal section; belongs to the transferase hexapeptide repeat family. As to quaternary structure, homotrimer. The cofactor is Mg(2+).

Its subcellular location is the cytoplasm. It catalyses the reaction alpha-D-glucosamine 1-phosphate + acetyl-CoA = N-acetyl-alpha-D-glucosamine 1-phosphate + CoA + H(+). The enzyme catalyses N-acetyl-alpha-D-glucosamine 1-phosphate + UTP + H(+) = UDP-N-acetyl-alpha-D-glucosamine + diphosphate. The protein operates within nucleotide-sugar biosynthesis; UDP-N-acetyl-alpha-D-glucosamine biosynthesis; N-acetyl-alpha-D-glucosamine 1-phosphate from alpha-D-glucosamine 6-phosphate (route II): step 2/2. It participates in nucleotide-sugar biosynthesis; UDP-N-acetyl-alpha-D-glucosamine biosynthesis; UDP-N-acetyl-alpha-D-glucosamine from N-acetyl-alpha-D-glucosamine 1-phosphate: step 1/1. Its pathway is bacterial outer membrane biogenesis; LPS lipid A biosynthesis. Functionally, catalyzes the last two sequential reactions in the de novo biosynthetic pathway for UDP-N-acetylglucosamine (UDP-GlcNAc). The C-terminal domain catalyzes the transfer of acetyl group from acetyl coenzyme A to glucosamine-1-phosphate (GlcN-1-P) to produce N-acetylglucosamine-1-phosphate (GlcNAc-1-P), which is converted into UDP-GlcNAc by the transfer of uridine 5-monophosphate (from uridine 5-triphosphate), a reaction catalyzed by the N-terminal domain. This chain is Bifunctional protein GlmU, found in Francisella philomiragia subsp. philomiragia (strain ATCC 25017 / CCUG 19701 / FSC 153 / O#319-036).